Here is an 815-residue protein sequence, read N- to C-terminus: MDIDQIEFKTNVFVLALRDVVVFPGMVVPLFVGRPKSMNALNAAMKEDKQIFLVTQKNATEETPTIDNLYQTGVMANILQLLKLPDGTLKVLVEGVKRFELLALNDEENFLTGDIQQVESDEQLDNDGVVLVRTIQERFQDYAALKKKIPSEVLKSVQKITDPNRLVDTISANLKLGIEEKQTLLEILTINDRLEHILKTIETEIDLLESEQRINSRVKKKMDQTQRNFYLNTKLQAIHEELGDSSEDGVSEFTRLKEQIEQAGMTKDALKVAEDELKKLKMMSPQSPEANIIRTYIEWLVSIPWKKRSRVSKDLNKAQTILDKQHYGLEKVKERIIEYLAVQKRVNKMKGPILCLVGPPGVGKTSLARSIAEATNRKYVRMSLGGVRDEAEIRGHRKTYLGALPGRVIQKMKTAGTRNPLFLLDEIDKMARDLRGDPASALLEVLDPEQNKAFNDHYLEVDYDLSDVMFVATSNSMDIPEALLDRMEIIDLAGYTENEKLNIATQHLLPREIKEHGLKQGELEVPSDTILKIIQTYTREAGVRLLDQSLAKICRKSLKEIVTNEAKAPITVTPDTLDKYLGVAKYRFGLADETNQIGQVAGLAWTRVGGDLLRIEATAMPGKGKNTSTGQLGSVMQESTQAAMSVIRSRSKELGLPDDFYEKQDVHLHFPEGAIKKDGPSAGIAICTAIASVLTQIPVRSDVAMTGEITLRGEVLPIGGLKEKLLAAARGGIKTVLIPYENVRDLAEISDEVKEGLDIHPVQWIDEVFKIALESFPNVENDEISAISMKDAEMGKLVANKQSTKEIQKKSPKRH.

The region spanning 12–205 (VFVLALRDVV…HILKTIETEI (194 aa)) is the Lon N-terminal domain. 358–365 (GPPGVGKT) lines the ATP pocket. The 182-residue stretch at 594–775 (TNQIGQVAGL…DEVFKIALES (182 aa)) folds into the Lon proteolytic domain. Catalysis depends on residues S681 and K724.

It belongs to the peptidase S16 family. As to quaternary structure, homohexamer. Organized in a ring with a central cavity.

Its subcellular location is the cytoplasm. It catalyses the reaction Hydrolysis of proteins in presence of ATP.. In terms of biological role, ATP-dependent serine protease that mediates the selective degradation of mutant and abnormal proteins as well as certain short-lived regulatory proteins. Required for cellular homeostasis and for survival from DNA damage and developmental changes induced by stress. Degrades polypeptides processively to yield small peptide fragments that are 5 to 10 amino acids long. Binds to DNA in a double-stranded, site-specific manner. The polypeptide is Lon protease 1 (Hydrogenovibrio crunogenus (strain DSM 25203 / XCL-2) (Thiomicrospira crunogena)).